Here is a 249-residue protein sequence, read N- to C-terminus: MADS-box transcription factor 17 (249 aa).

Residues 1-61 (MGRGRVELKR…GKLYEFGSAG (61 aa)) enclose the MADS-box domain. A K-box domain is found at 88-178 (HQSWYQEMSR…KNKLEAEADS (91 aa)). The tract at residues 228–249 (ANPRSNGGGGDQNNNFVMGWPL) is disordered.

In terms of assembly, may interact with the K-box of MADS6. Expressed in the floral meristem, lodicule, palea, lemma, receptacle, empty glume, stamen, pistil, and ovule.

The protein localises to the nucleus. Probable transcription factor. Plays minor but redundant roles with MADS6 in floral development. This Oryza sativa subsp. japonica (Rice) protein is MADS-box transcription factor 17 (MADS17).